Consider the following 113-residue polypeptide: Protein PucD (113 aa).

Its function is as follows. Seems to be required for the LH-II stabilization. This chain is Protein PucD (pucD), found in Rhodobacter capsulatus (Rhodopseudomonas capsulata).